Here is a 508-residue protein sequence, read N- to C-terminus: Serine/threonine-protein kinase VRK2 (508 aa).

A Protein kinase domain is found at 29–319 (WVLGKKIGSG…KKILNPHGIP (291 aa)). Residues 35–43 (IGSGGFGLI) and Lys-61 contribute to the ATP site. Asp-166 functions as the Proton acceptor in the catalytic mechanism. A Phosphothreonine modification is found at Thr-336. Residues 397 to 508 (TRRRQKYQES…MLVFLALFFL (112 aa)) are interaction with MAP3K7. Ser-406 bears the Phosphoserine mark. A helical; Anchor for type IV membrane protein transmembrane segment spans residues 487-507 (VYYYRIIIPVLLMLVFLALFF).

This sequence belongs to the protein kinase superfamily. CK1 Ser/Thr protein kinase family. VRK subfamily. In terms of assembly, isoform 1 interacts with MAP3K7, MAP2K7, MAP2K1 and KSR1. Isoform 1 and isoform 2 interact with RAN and MAPK8IP1. (Microbial infection) Isoform 1 interacts with Epstein-Barr virus BHRF1; this interaction is involved in protecting cells from apoptosis. As to quaternary structure, (Microbial infection) Isoform 1 interacts with vaccinia protein B12. In terms of processing, autophosphorylated. Isoform 1 and isoform 2 are expressed in various tumor cell lines. Expression of isoform 1 inversely correlates with ERBB2 in breast carcinomas (at protein level). Widely expressed. Highly expressed in fetal liver, skeletal muscle, pancreas, heart, peripheral blood leukocytes and testis.

It localises to the cytoplasm. Its subcellular location is the endoplasmic reticulum membrane. The protein localises to the mitochondrion membrane. It is found in the nucleus envelope. The protein resides in the nucleus. It catalyses the reaction L-seryl-[protein] + ATP = O-phospho-L-seryl-[protein] + ADP + H(+). The catalysed reaction is L-threonyl-[protein] + ATP = O-phospho-L-threonyl-[protein] + ADP + H(+). Its activity is regulated as follows. RAN inhibits its autophosphorylation and its ability to phosphorylate histone H3. In terms of biological role, serine/threonine kinase that regulates several signal transduction pathways. Isoform 1 modulates the stress response to hypoxia and cytokines, such as interleukin-1 beta (IL1B) and this is dependent on its interaction with MAPK8IP1, which assembles mitogen-activated protein kinase (MAPK) complexes. Inhibition of signal transmission mediated by the assembly of MAPK8IP1-MAPK complexes reduces JNK phosphorylation and JUN-dependent transcription. Phosphorylates 'Thr-18' of p53/TP53, histone H3, and may also phosphorylate MAPK8IP1. Phosphorylates BANF1 and disrupts its ability to bind DNA and reduces its binding to LEM domain-containing proteins. Down-regulates the transactivation of transcription induced by ERBB2, HRAS, BRAF, and MEK1. Blocks the phosphorylation of ERK in response to ERBB2 and HRAS. Can also phosphorylate the following substrates that are commonly used to establish in vitro kinase activity: casein, MBP and histone H2B, but it is not sure that this is physiologically relevant. Phosphorylates 'Thr-18' of p53/TP53, as well as histone H3. Reduces p53/TP53 ubiquitination by MDM2, promotes p53/TP53 acetylation by EP300 and thereby increases p53/TP53 stability and activity. The sequence is that of Serine/threonine-protein kinase VRK2 (VRK2) from Homo sapiens (Human).